The primary structure comprises 36 residues: Alpha-conotoxin-like Pu1.3 (36 aa).

The propeptide occupies 1-21 (SDGRNAGADRKGFGLISQMFK). 2 disulfide bridges follow: Cys-24–Cys-30 and Cys-25–Cys-36.

It belongs to the conotoxin A superfamily. In terms of tissue distribution, expressed by the venom duct.

The protein resides in the secreted. Alpha-conotoxins act on postsynaptic membranes, they bind to the nicotinic acetylcholine receptors (nAChR) and thus inhibit them. The chain is Alpha-conotoxin-like Pu1.3 from Conus pulicarius (Flea-bitten cone).